A 126-amino-acid polypeptide reads, in one-letter code: Large ribosomal subunit protein bL12 (126 aa).

It belongs to the bacterial ribosomal protein bL12 family. Homodimer. Part of the ribosomal stalk of the 50S ribosomal subunit. Forms a multimeric L10(L12)X complex, where L10 forms an elongated spine to which 2 to 4 L12 dimers bind in a sequential fashion. Binds GTP-bound translation factors.

Forms part of the ribosomal stalk which helps the ribosome interact with GTP-bound translation factors. Is thus essential for accurate translation. In Methylobacterium sp. (strain 4-46), this protein is Large ribosomal subunit protein bL12.